A 201-amino-acid chain; its full sequence is Natural cytotoxicity triggering receptor 3 (201 aa).

An N-terminal signal peptide occupies residues 1 to 18; sequence MAWMLLLILIMVHPGSCA. An Ig-like domain is found at 19–126; sequence LWVSQPPEIR…VGTGNGTRLV (108 aa). Over 19 to 135 the chain is Extracellular; it reads LWVSQPPEIR…VVEKEHPQLG (117 aa). A disulfide bridge links C39 with C108. N-linked (GlcNAc...) asparagine glycans are attached at residues N42 and N121. The helical transmembrane segment at 136 to 156 threads the bilayer; sequence AGTVLLLRAGFYAVSFLSVAV. At 157–201 the chain is on the cytoplasmic side; that stretch reads GSTVYYQGKCLTWKGPRRQLPAVVPAPLPPPCGSSAQLLPPVPGG.

This sequence belongs to the natural cytotoxicity receptor (NCR) family. Homodimer in the unliganted form. Interacts with CD3Z. Interacts with and is activated by binding to NCR3LG1. Interacts with and is activated by binding to BAG6. Interacts with and is inhibited by binding to LGALS3.

It is found in the cell membrane. Cell membrane receptor of natural killer/NK cells that is activated by binding of extracellular ligands including BAG6 and NCR3LG1. Stimulates NK cells cytotoxicity toward neighboring cells producing these ligands. It controls, for instance, NK cells cytotoxicity against tumor cells. Engagement of NCR3 by BAG6 also promotes myeloid dendritic cells (DC) maturation, both through killing DCs that did not acquire a mature phenotype, and inducing the release by NK cells of TNFA and IFNG that promote DC maturation. The sequence is that of Natural cytotoxicity triggering receptor 3 (NCR3) from Pan troglodytes (Chimpanzee).